Reading from the N-terminus, the 840-residue chain is Sorting nexin-25 (840 aa).

The region spanning 1–164 (MDRVLRDVFD…MLLRQLEYRE (164 aa)) is the PXA domain. The RGS domain occupies 287–401 (QFEDIMTNPF…LVSDLYEKLM (115 aa)). The interval 404–437 (EEEEEPDAQLASEKDELGSGGEAGEEAVEGTSGV) is disordered. The stretch at 446–494 (IKLRELNEKLEYKRQALSSIQNAPKPDKKIISKLKDEILLIEKECTALQ) forms a coiled coil. The 121-residue stretch at 508–628 (GLWRASITSA…AFLSPSPDYL (121 aa)) folds into the PX domain. Phosphoserine is present on serine 665.

The protein belongs to the sorting nexin family.

Its subcellular location is the endosome membrane. In terms of biological role, may be involved in several stages of intracellular trafficking. The sequence is that of Sorting nexin-25 (Snx25) from Mus musculus (Mouse).